We begin with the raw amino-acid sequence, 431 residues long: Keratin, type I cytoskeletal 40 (431 aa).

The head stretch occupies residues 1–89 (MASDCSPTGC…CEDGVFNSNE (89 aa)). One can recognise an IF rod domain in the interval 89-400 (EKETMQFLND…GLLDSEDSRL (312 aa)). The segment at 90 to 124 (KETMQFLNDRLASYLEKVRGLEELNAELECRIREQ) is coil 1A. The tract at residues 125 to 135 (CEEDVPLVCPD) is linker 1. The segment at 136–236 (YQCYFDTIED…HEEEVNVLRG (101 aa)) is coil 1B. The interval 237–252 (QLGDRLSVELDTAPTT) is linker 12. Residues 253–396 (DLNRVLDEMR…NTYQGLLDSE (144 aa)) form a coil 2 region. Residues 397-431 (DSRLPCNPCSATSMSNDTCEPCSAYVICTVENSCP) form a tail region.

Belongs to the intermediate filament family. As to quaternary structure, heterotetramer of two type I and two type II keratins.

Its function is as follows. May play a role in late hair differentiation. This chain is Keratin, type I cytoskeletal 40 (KRT40), found in Bos taurus (Bovine).